We begin with the raw amino-acid sequence, 439 residues long: Apolipoprotein N-acyltransferase (439 aa).

The next 6 membrane-spanning stretches (helical) occupy residues 13–33 (LLAG…FLVF), 47–67 (LFSF…IPLI), 75–95 (FIAY…QFGL), 97–117 (YLLW…YTLV), 149–169 (NAGT…FPLF), and 175–195 (IFSL…ETSY). The 233-residue stretch at 207–439 (IQPFVPQDVK…GSRGILLFSF (233 aa)) folds into the CN hydrolase domain. Residue glutamate 248 is the Proton acceptor of the active site. The active site involves lysine 305. Cysteine 355 acts as the Nucleophile in catalysis.

This sequence belongs to the CN hydrolase family. Apolipoprotein N-acyltransferase subfamily.

It is found in the cell inner membrane. It carries out the reaction N-terminal S-1,2-diacyl-sn-glyceryl-L-cysteinyl-[lipoprotein] + a glycerophospholipid = N-acyl-S-1,2-diacyl-sn-glyceryl-L-cysteinyl-[lipoprotein] + a 2-acyl-sn-glycero-3-phospholipid + H(+). The protein operates within protein modification; lipoprotein biosynthesis (N-acyl transfer). Its function is as follows. Catalyzes the phospholipid dependent N-acylation of the N-terminal cysteine of apolipoprotein, the last step in lipoprotein maturation. The protein is Apolipoprotein N-acyltransferase of Aquifex aeolicus (strain VF5).